Here is a 155-residue protein sequence, read N- to C-terminus: MSEQNNTEMTFQIQRIYTKDISFEAPNAPHVFQKDWQPEVKLDLDTASSQLADDVYEVVLRVTVTASLGEETAFLCEVQQGGIFSIAGIEGTQMAHCLGAYCPNILFPYARECITSMVSRGTFPQLNLAPVNFDALFMNYLQQQAGEGTEEHQDA.

The protein belongs to the SecB family. Homotetramer, a dimer of dimers. One homotetramer interacts with 1 SecA dimer.

Its subcellular location is the cytoplasm. Its function is as follows. One of the proteins required for the normal export of preproteins out of the cell cytoplasm. It is a molecular chaperone that binds to a subset of precursor proteins, maintaining them in a translocation-competent state. It also specifically binds to its receptor SecA. The chain is Protein-export protein SecB from Escherichia coli O139:H28 (strain E24377A / ETEC).